We begin with the raw amino-acid sequence, 993 residues long: Signal peptide, CUB and EGF-like domain-containing protein 3 (993 aa).

Residues 1–20 (MGSGRVPGLCLLVLLVHARA) form the signal peptide. Positions 29–69 (DVDECVEGTDNCHIDAICQNTPRSYKCICKSGYTGDGKHCK) constitute an EGF-like 1; calcium-binding domain. 26 cysteine pairs are disulfide-bonded: Cys33–Cys46, Cys40–Cys55, Cys57–Cys68, Cys74–Cys86, Cys82–Cys95, Cys97–Cys110, Cys116–Cys127, Cys123–Cys136, Cys161–Cys172, Cys168–Cys182, Cys184–Cys197, Cys201–Cys212, Cys208–Cys221, Cys223–Cys236, Cys240–Cys251, Cys247–Cys260, Cys262–Cys275, Cys281–Cys292, Cys288–Cys301, Cys303–Cys316, Cys322–Cys332, Cys328–Cys341, Cys343–Cys355, Cys361–Cys372, Cys368–Cys381, and Cys383–Cys397. The EGF-like 2; calcium-binding domain maps to 70 to 111 (DVDECEREDNAGCVHDCVNIPGNYRCTCYDGFHLAHDGHNCL). In terms of domain architecture, EGF-like 3; calcium-binding spans 112-148 (DVDECAEGNGGCQQSCVNMMGSYECHCREGFFLSDNQ). EGF-like domains are found at residues 157 to 198 (EGMN…RDCK), 199 to 237 (LTCN…KTCI), and 238 to 276 (ETCA…KTCK). One can recognise an EGF-like 7; calcium-binding domain in the interval 277–317 (DIDECRLNNGGCDHICRNTVGSFECSCKKGYKLLINERNCQ). Residues 318–356 (DIDECSFDRTCDHICVNTPGSFQCLCHRGYLLYGITHCG) enclose the EGF-like 8; calcium-binding domain. The EGF-like 9; calcium-binding domain maps to 357-398 (DVDECSINRGGCRFGCINTPGSYQCTCPAGQGRLHWNGKDCT). Asn417, Asn464, Asn685, Asn756, and Asn785 each carry an N-linked (GlcNAc...) asparagine glycan. Disulfide bonds link Cys804–Cys830 and Cys857–Cys878. Residues 804–916 (CGGELGEFTG…RGFQIPYVTY (113 aa)) enclose the CUB domain.

In terms of assembly, forms homooligomers. Forms heterooligomers with SCUBE1 and SCUBE2. Interacts with TGFBR2 through the CUB domain; this interaction does not affect TGFB1-binding to TGFBR2. Interacts with BMP2, BMP4 and BMP7; the interaction is mediated by the CUB domain. Interacts with BMPR1A, BMPR1B and BMPR2; the interaction with BMPR1A and BMPR1B is BMP2- and BMP4-dependent. N-glycosylated. Post-translationally, proteolytic cleavage produces a CUB-containing C-terminal fragment that retains the ability to bind to TGFBR2. This reaction is catalyzed in vitro by MMP2 and, to a lesser extent, by MMP9. Highly expressed in osteoblasts. In normal lung, mainly expressed in bronchial epithelial cells. Tends to be up-regulated in lung cancer cells.

Its subcellular location is the secreted. The protein localises to the cell surface. Its function is as follows. Is a positive regulator of the BMP signaling pathway, required for proper chondrogenesis, osteogenesis and skeletal development. It acts as a coreceptor for BMP ligands, particularly BMP2 and BMP4, facilitating their interactions with BMP type I receptors. It is required for ligand-induced recruitment of BMP receptors to lipid rafts. Binds to TGFBR2 and activates TGFB signaling. In lung cancer cells, could serve as an endogenous autocrine and paracrine ligand of TGFBR2, which could regulate TGFBR2 signaling and hence modulate epithelial-mesenchymal transition and cancer progression. The protein is Signal peptide, CUB and EGF-like domain-containing protein 3 of Homo sapiens (Human).